A 674-amino-acid chain; its full sequence is UvrABC system protein C (674 aa).

Residues 16-95 (TNPGVYRFRD…IKEFKPRFNV (80 aa)) enclose the GIY-YIG domain. One can recognise a UVR domain in the interval 207–242 (KRFTNKLEKQMAAAVARLDYEQAARIRDDITALRKV).

It belongs to the UvrC family. As to quaternary structure, interacts with UvrB in an incision complex.

Its subcellular location is the cytoplasm. The UvrABC repair system catalyzes the recognition and processing of DNA lesions. UvrC both incises the 5' and 3' sides of the lesion. The N-terminal half is responsible for the 3' incision and the C-terminal half is responsible for the 5' incision. This is UvrABC system protein C from Pseudarthrobacter chlorophenolicus (strain ATCC 700700 / DSM 12829 / CIP 107037 / JCM 12360 / KCTC 9906 / NCIMB 13794 / A6) (Arthrobacter chlorophenolicus).